The following is a 418-amino-acid chain: Serpin A9 (418 aa).

The first 25 residues, 1 to 25, serve as a signal peptide directing secretion; that stretch reads MGSSSFYRVLLLVGFCAPIFCMLSS. 3 N-linked (GlcNAc...) asparagine glycosylation sites follow: N103, N213, and N224.

Belongs to the serpin family.

It is found in the secreted. In Mus musculus (Mouse), this protein is Serpin A9 (Serpina9).